The chain runs to 201 residues: Thymidylate kinase (201 aa).

Residue 7 to 14 (GGEGSGKT) participates in ATP binding.

The protein belongs to the thymidylate kinase family.

The catalysed reaction is dTMP + ATP = dTDP + ADP. Functionally, phosphorylation of dTMP to form dTDP in both de novo and salvage pathways of dTTP synthesis. This is Thymidylate kinase from Acholeplasma laidlawii (strain PG-8A).